Reading from the N-terminus, the 162-residue chain is 2-C-methyl-D-erythritol 2,4-cyclodiphosphate synthase (162 aa).

A divalent metal cation contacts are provided by Asp-12 and His-14. 4-CDP-2-C-methyl-D-erythritol 2-phosphate is bound by residues 12–14 (DVH) and 38–39 (HS). A divalent metal cation is bound at residue His-46. 4-CDP-2-C-methyl-D-erythritol 2-phosphate is bound by residues 60–62 (DIG), 65–69 (FPDTD), Phe-143, and Arg-146.

The protein belongs to the IspF family. As to quaternary structure, homotrimer. A divalent metal cation is required as a cofactor.

It catalyses the reaction 4-CDP-2-C-methyl-D-erythritol 2-phosphate = 2-C-methyl-D-erythritol 2,4-cyclic diphosphate + CMP. The protein operates within isoprenoid biosynthesis; isopentenyl diphosphate biosynthesis via DXP pathway; isopentenyl diphosphate from 1-deoxy-D-xylulose 5-phosphate: step 4/6. Functionally, involved in the biosynthesis of isopentenyl diphosphate (IPP) and dimethylallyl diphosphate (DMAPP), two major building blocks of isoprenoid compounds. Catalyzes the conversion of 4-diphosphocytidyl-2-C-methyl-D-erythritol 2-phosphate (CDP-ME2P) to 2-C-methyl-D-erythritol 2,4-cyclodiphosphate (ME-CPP) with a corresponding release of cytidine 5-monophosphate (CMP). This Azoarcus sp. (strain BH72) protein is 2-C-methyl-D-erythritol 2,4-cyclodiphosphate synthase.